The chain runs to 32 residues: Cytochrome b6-f complex subunit 7 (32 aa).

A helical transmembrane segment spans residues 9 to 27 (AVVFWVLIPVGLAGGALLL).

It belongs to the PetM family. In terms of assembly, the 4 large subunits of the cytochrome b6-f complex are cytochrome b6, subunit IV (17 kDa polypeptide, PetD), cytochrome f and the Rieske protein, while the 4 small subunits are PetG, PetL, PetM and PetN. The complex functions as a dimer.

The protein resides in the cellular thylakoid membrane. Functionally, component of the cytochrome b6-f complex, which mediates electron transfer between photosystem II (PSII) and photosystem I (PSI), cyclic electron flow around PSI, and state transitions. This Synechococcus sp. (strain CC9311) protein is Cytochrome b6-f complex subunit 7.